Here is a 334-residue protein sequence, read N- to C-terminus: Protein SCO1 homolog 1, mitochondrial (334 aa).

A mitochondrion-targeting transit peptide spans 1-13 (MASALCRTASRLR). Residues 74–120 (SASDTTSKHDSGKPETKSSEKNEKSGGSESSDGGSDHKNERASGKDV) are disordered. Composition is skewed to basic and acidic residues over residues 79–99 (TSKH…EKSG) and 107–120 (GSDH…GKDV). The helical transmembrane segment at 125–144 (VSWMSFFLLFATGAGLVYYY) threads the bilayer. The Thioredoxin domain maps to 166–331 (PSAGKAAIGG…TDGVVKEIRQ (166 aa)). Positions 206, 210, and 295 each coordinate Cu cation.

The protein belongs to the SCO1/2 family. As to expression, expressed in the whole plant with highest expression in imbibed seeds, embryos, endosperm, and root tips.

Its subcellular location is the mitochondrion inner membrane. Functionally, thought to play a role in cellular copper homeostasis, mitochondrial redox signaling or insertion of copper into the active site of COX. Plays an essential role in embryo development. In Arabidopsis thaliana (Mouse-ear cress), this protein is Protein SCO1 homolog 1, mitochondrial (HCC1).